A 653-amino-acid polypeptide reads, in one-letter code: Phospholipid-transporting ATPase VD (653 aa).

The Cytoplasmic segment spans residues 1-375 (MACNLCYEAE…GHWCYTRLSN (375 aa)). Residues E14, F56, K80, R124, T204, G205, D206, 259–266 (GLIITGKT), R293, and K299 contribute to the ATP site. D319 is a binding site for Mg(2+). Residues N322 and D323 each contribute to the ATP site. D323 is a binding site for Mg(2+). The helical transmembrane segment at 376–396 (MILYFFYKNVAYVNLLFWYQF) threads the bilayer. The Exoplasmic loop segment spans residues 397-407 (FCGFSGTSMTD). The helical transmembrane segment at 408–428 (YWVLIFFNLLFTSAPPVIYGV) threads the bilayer. Residues 429–458 (LEKDVSAETLMQLPELYKSGQKSEAYLPHT) lie on the Cytoplasmic side of the membrane. Residues 459–480 (FWITLLDAFYQSLVCFFVPYFT) form a helical membrane-spanning segment. The Exoplasmic loop segment spans residues 481–487 (YQGSDID). Residues 488–510 (IFAFGNPLNTAALFIILLHLIIE) traverse the membrane as a helical segment. Residues 511-516 (SKSLTW) lie on the Cytoplasmic side of the membrane. The helical transmembrane segment at 517–537 (IHMLVITGSILSYFLFAIVFG) threads the bilayer. The Exoplasmic loop portion of the chain corresponds to 538–555 (AMCVTCNPPSNPYWIMQE). Residues 556–580 (HVLDPVFYLVCILTTCIALLPRFVY) form a helical membrane-spanning segment. The Cytoplasmic portion of the chain corresponds to 581–653 (RGAGKMNQVT…AFEMARPCKD (73 aa)).

The protein belongs to the cation transport ATPase (P-type) (TC 3.A.3) family. Type IV subfamily. Component of a P4-ATPase flippase complex which consists of a catalytic alpha subunit ATP10A and an accessory beta subunit TMEM30A. Requires Mg(2+) as cofactor. Autophosphorylated at the conserved aspartate of the P-type ATPase signature sequence.

It localises to the cell membrane. Its subcellular location is the endoplasmic reticulum membrane. The catalysed reaction is ATP + H2O + phospholipidSide 1 = ADP + phosphate + phospholipidSide 2.. It catalyses the reaction a beta-D-glucosyl-(1&lt;-&gt;1')-N-acylsphing-4-enine(out) + ATP + H2O = a beta-D-glucosyl-(1&lt;-&gt;1')-N-acylsphing-4-enine(in) + ADP + phosphate + H(+). In terms of biological role, catalytic component of a P4-ATPase flippase complex, which catalyzes the hydrolysis of ATP coupled to the transport of glucosylceramide (GlcCer) from the outer to the inner leaflet of the plasma membrane. This is Phospholipid-transporting ATPase VD (ATP10D) from Macaca fascicularis (Crab-eating macaque).